A 420-amino-acid chain; its full sequence is MAQTLAQKILQAHTDDAVEQDGQIVQCRVSMVLANDITGPLAIKSFYGMGAKKVFDRTKIALVMDHFTPQKDIDSANQVLISRRFAEEQDIVHYYEGGDCGVEHTLLPEQGLVGPGDLVIGADSHTCTYGGIGAFATGMGSTDIAAGMALGETWLKVPSTIRVNISGDMPRWLRGKDLMLMLIGAIGVDGALYKALEFGGSVVDALSVEGRLSMANMAIEAGGKAGLFAVDAKTRTYCAEHKRPGVLENMAADSGAVYERVVDMNVTGKEPVVACPHLPSNVKPVSEVRDTAIQQVVIGSCTNGRISDMRDAAEVLRGRKVDKGVRCIVLPSTPTVWKQCLREGLIEVFMEAGCIVGPSTCGPCLGGHMGILGDGERAVATTNRNFRGRMGSLSSEVYLASPLVAAASAVTGYVAGPDQL.

Residues Cys-301, Cys-361, and Cys-364 each coordinate [4Fe-4S] cluster.

This sequence belongs to the aconitase/IPM isomerase family. LeuC type 2 subfamily. In terms of assembly, heterodimer of LeuC and LeuD. [4Fe-4S] cluster serves as cofactor.

The catalysed reaction is (2R,3S)-3-isopropylmalate = (2S)-2-isopropylmalate. Its pathway is amino-acid biosynthesis; L-leucine biosynthesis; L-leucine from 3-methyl-2-oxobutanoate: step 2/4. Its function is as follows. Catalyzes the isomerization between 2-isopropylmalate and 3-isopropylmalate, via the formation of 2-isopropylmaleate. This chain is 3-isopropylmalate dehydratase large subunit, found in Desulfovibrio desulfuricans (strain ATCC 27774 / DSM 6949 / MB).